The chain runs to 173 residues: Crossover junction endodeoxyribonuclease RuvC (173 aa).

Catalysis depends on residues aspartate 8, glutamate 67, and aspartate 139. Positions 8, 67, and 139 each coordinate Mg(2+).

Belongs to the RuvC family. In terms of assembly, homodimer which binds Holliday junction (HJ) DNA. The HJ becomes 2-fold symmetrical on binding to RuvC with unstacked arms; it has a different conformation from HJ DNA in complex with RuvA. In the full resolvosome a probable DNA-RuvA(4)-RuvB(12)-RuvC(2) complex forms which resolves the HJ. The cofactor is Mg(2+).

The protein resides in the cytoplasm. The enzyme catalyses Endonucleolytic cleavage at a junction such as a reciprocal single-stranded crossover between two homologous DNA duplexes (Holliday junction).. Its function is as follows. The RuvA-RuvB-RuvC complex processes Holliday junction (HJ) DNA during genetic recombination and DNA repair. Endonuclease that resolves HJ intermediates. Cleaves cruciform DNA by making single-stranded nicks across the HJ at symmetrical positions within the homologous arms, yielding a 5'-phosphate and a 3'-hydroxyl group; requires a central core of homology in the junction. The consensus cleavage sequence is 5'-(A/T)TT(C/G)-3'. Cleavage occurs on the 3'-side of the TT dinucleotide at the point of strand exchange. HJ branch migration catalyzed by RuvA-RuvB allows RuvC to scan DNA until it finds its consensus sequence, where it cleaves and resolves the cruciform DNA. The polypeptide is Crossover junction endodeoxyribonuclease RuvC (Yersinia pseudotuberculosis serotype O:1b (strain IP 31758)).